Consider the following 303-residue polypeptide: Kanosamine kinase (303 aa).

Belongs to the ROK (NagC/XylR) family.

The enzyme catalyses kanosamine + ATP = D-kanosamine 6-phosphate + ADP + H(+). It functions in the pathway antibiotic biosynthesis; rifamycin B biosynthesis. Its activity is regulated as follows. Inhibited by Zn(2+), Cu(2+), and Fe(2+). Its function is as follows. Involved in the biosynthesis of 3-amino-5-hydroxybenzoate (AHBA), a compound that then serves as the starter unit for the assembly of a polyketide during the biosynthesis of rifamycin B and other ansamycin antibiotics. Catalyzes only the phosphorylation of kanosamine to yield kanosamine 6-phosphate. The protein is Kanosamine kinase (rifN) of Amycolatopsis mediterranei (strain S699) (Nocardia mediterranei).